A 165-amino-acid polypeptide reads, in one-letter code: Large ribosomal subunit protein uL10 (165 aa).

The protein belongs to the universal ribosomal protein uL10 family. In terms of assembly, part of the ribosomal stalk of the 50S ribosomal subunit. The N-terminus interacts with L11 and the large rRNA to form the base of the stalk. The C-terminus forms an elongated spine to which L12 dimers bind in a sequential fashion forming a multimeric L10(L12)X complex.

Functionally, forms part of the ribosomal stalk, playing a central role in the interaction of the ribosome with GTP-bound translation factors. The chain is Large ribosomal subunit protein uL10 from Burkholderia ambifaria (strain MC40-6).